A 682-amino-acid chain; its full sequence is MSRKQLALFEPVLLVQALTDAVKKLSPRAQWRNPVMFVVWAGSVLTTLLTLAMVTGQITGSALFTGVISLWLWFTVLFANFAEALAEGRSKAQANSLKGVKKTAFARRLRAPRHDAQADNVPAAELRKGDIVLVKAGDIIPCDGEVIEGGASVDESAITGESAPVIRESGGDFASVTGGTRILSDWLVIACSVNPGETFLDRMIAMVEGAQRRKTPNEIALTILLIALTIVFLLATATLWPFSAWGGNAVSVTVLVALLVCLIPTTIGGLLSAIGVAGMSRMLGANVIATSGRAVEAAGDVDVLLLDKTGTITLGNRQASDFIPARGVDERTLADAAQLASLADETPEGRSIVILAKQRFNLRERDVQSLHATFVPFTAQSRMSGINIDNRMIRKGSVDAIRRHVESNGGHFPADVEQNVENVARLGATPLVVVEGARVLGVIALKDIVKGGIKERFAQLRKMGIKTVMITGDNRLTAAAIAAEAGVDDFLAEATPEAKLALIRQYQAEGRLVAMTGDGTNDAPALAQADVAVAMNSGTQAAKEAGNMVDLDSNPTKLIEVVHIGKQMLMTRGSLTTFSIANDVAKYFAIIPAAFAATYPQLNALNVMGLHSPNSAILSAVIFNALIIIFLIPLALKGVSYKPLSASAMLRRNLWIYGLGGLVVPFIGIKVIDVLLTLLGLA.

The next 4 helical transmembrane spans lie at 34–54, 62–82, 219–239, and 254–274; these read PVMF…LAMV, ALFT…ANFA, IALT…TATL, and VLVA…LSAI. D307 acts as the 4-aspartylphosphate intermediate in catalysis. Residues D344, E348, 377 to 384, and K395 contribute to the ATP site; that span reads FTAQSRMS. The Mg(2+) site is built by D518 and D522. 3 helical membrane-spanning segments follow: residues 588–608, 616–636, and 662–682; these read FAII…LNVM, AILS…PLAL, and LVVP…LGLA.

The protein belongs to the cation transport ATPase (P-type) (TC 3.A.3) family. Type IA subfamily. As to quaternary structure, the system is composed of three essential subunits: KdpA, KdpB and KdpC.

It is found in the cell inner membrane. It catalyses the reaction K(+)(out) + ATP + H2O = K(+)(in) + ADP + phosphate + H(+). Its function is as follows. Part of the high-affinity ATP-driven potassium transport (or Kdp) system, which catalyzes the hydrolysis of ATP coupled with the electrogenic transport of potassium into the cytoplasm. This subunit is responsible for energy coupling to the transport system and for the release of the potassium ions to the cytoplasm. The polypeptide is Potassium-transporting ATPase ATP-binding subunit (Salmonella schwarzengrund (strain CVM19633)).